A 430-amino-acid polypeptide reads, in one-letter code: Serine--tRNA ligase (430 aa).

237–239 (TAE) provides a ligand contact to L-serine. 268–270 (RAE) contributes to the ATP binding site. Position 291 (glutamate 291) interacts with L-serine. 355 to 358 (EVSS) is a binding site for ATP. Serine 391 contributes to the L-serine binding site.

This sequence belongs to the class-II aminoacyl-tRNA synthetase family. Type-1 seryl-tRNA synthetase subfamily. In terms of assembly, homodimer. The tRNA molecule binds across the dimer.

The protein localises to the cytoplasm. The enzyme catalyses tRNA(Ser) + L-serine + ATP = L-seryl-tRNA(Ser) + AMP + diphosphate + H(+). The catalysed reaction is tRNA(Sec) + L-serine + ATP = L-seryl-tRNA(Sec) + AMP + diphosphate + H(+). The protein operates within aminoacyl-tRNA biosynthesis; selenocysteinyl-tRNA(Sec) biosynthesis; L-seryl-tRNA(Sec) from L-serine and tRNA(Sec): step 1/1. Its function is as follows. Catalyzes the attachment of serine to tRNA(Ser). Is also able to aminoacylate tRNA(Sec) with serine, to form the misacylated tRNA L-seryl-tRNA(Sec), which will be further converted into selenocysteinyl-tRNA(Sec). The chain is Serine--tRNA ligase from Baumannia cicadellinicola subsp. Homalodisca coagulata.